Reading from the N-terminus, the 180-residue chain is Large ribosomal subunit protein uL5 (180 aa).

Belongs to the universal ribosomal protein uL5 family. In terms of assembly, part of the 50S ribosomal subunit; part of the 5S rRNA/L5/L18/L25 subcomplex. Contacts the 5S rRNA and the P site tRNA. Forms a bridge to the 30S subunit in the 70S ribosome.

This is one of the proteins that bind and probably mediate the attachment of the 5S RNA into the large ribosomal subunit, where it forms part of the central protuberance. In the 70S ribosome it contacts protein S13 of the 30S subunit (bridge B1b), connecting the 2 subunits; this bridge is implicated in subunit movement. Contacts the P site tRNA; the 5S rRNA and some of its associated proteins might help stabilize positioning of ribosome-bound tRNAs. This chain is Large ribosomal subunit protein uL5, found in Xanthomonas axonopodis pv. citri (strain 306).